The sequence spans 479 residues: Ubiquinone biosynthesis monooxygenase COQ6, mitochondrial (479 aa).

This sequence belongs to the UbiH/COQ6 family. As to quaternary structure, component of a multi-subunit COQ enzyme complex, composed of at least COQ3, COQ4, COQ5, COQ6, COQ7 and COQ9. FAD serves as cofactor.

The protein localises to the mitochondrion inner membrane. The catalysed reaction is 4-hydroxy-3-(all-trans-decaprenyl)benzoate + 2 reduced [2Fe-2S]-[ferredoxin] + O2 + 2 H(+) = 3,4-dihydroxy-5-(all-trans-decaprenyl)benzoate + 2 oxidized [2Fe-2S]-[ferredoxin] + H2O. The enzyme catalyses 2-methoxy-6-(all-trans-decaprenyl)phenol + 2 reduced [2Fe-2S]-[ferredoxin] + O2 + 2 H(+) = 2-methoxy-6-(all-trans-decaprenyl)benzene-1,4-diol + 2 oxidized [2Fe-2S]-[ferredoxin] + H2O. Its pathway is cofactor biosynthesis; ubiquinone biosynthesis. In terms of biological role, FAD-dependent monooxygenase required for two non-consecutive steps during ubiquinone biosynthesis. Required for the C5-ring hydroxylation during ubiquinone biosynthesis by catalyzing the hydroxylation of 4-hydroxy-3-(all-trans-decaprenyl)benzoic acid to 3,4-dihydroxy-5-(all-trans-decaprenyl)benzoic acid. Also acts downstream of COQ4, for the C1-hydroxylation during ubiquinone biosynthesis by catalyzing the hydroxylation of 2-methoxy-6-(all-trans-decaprenyl)phenol to 2-methoxy-6-(all-trans-decaprenyl)benzene-1,4-diol. The electrons required for the hydroxylation reaction are funneled indirectly to coq6 from NADPH via a ferredoxin/ferredoxin reductase system. The sequence is that of Ubiquinone biosynthesis monooxygenase COQ6, mitochondrial from Schizosaccharomyces pombe (strain 972 / ATCC 24843) (Fission yeast).